We begin with the raw amino-acid sequence, 675 residues long: Methionine--tRNA ligase (675 aa).

A 'HIGH' region motif is present at residues 15-25 (PYANGSIHLGH). The Zn(2+) site is built by C146, C149, C159, and C162. The short motif at 332-336 (KMSKS) is the 'KMSKS' region element. K335 serves as a coordination point for ATP. The region spanning 573 to 675 (DFAKVDMRIA…SGAQPGMQVK (103 aa)) is the tRNA-binding domain.

The protein belongs to the class-I aminoacyl-tRNA synthetase family. MetG type 1 subfamily. In terms of assembly, homodimer. Requires Zn(2+) as cofactor.

It localises to the cytoplasm. The catalysed reaction is tRNA(Met) + L-methionine + ATP = L-methionyl-tRNA(Met) + AMP + diphosphate. Its function is as follows. Is required not only for elongation of protein synthesis but also for the initiation of all mRNA translation through initiator tRNA(fMet) aminoacylation. In Yersinia pseudotuberculosis serotype IB (strain PB1/+), this protein is Methionine--tRNA ligase.